An 84-amino-acid chain; its full sequence is ATP synthase subunit c (84 aa).

Helical transmembrane passes span 9-29 and 54-74; these read IFGS…GFSL and IVAG…LLFI.

The protein belongs to the ATPase C chain family. As to quaternary structure, F-type ATPases have 2 components, F(1) - the catalytic core - and F(0) - the membrane proton channel. F(1) has five subunits: alpha(3), beta(3), gamma(1), delta(1), epsilon(1). F(0) has three main subunits: a(1), b(2) and c(10-14). The alpha and beta chains form an alternating ring which encloses part of the gamma chain. F(1) is attached to F(0) by a central stalk formed by the gamma and epsilon chains, while a peripheral stalk is formed by the delta and b chains.

The protein localises to the cell inner membrane. Functionally, f(1)F(0) ATP synthase produces ATP from ADP in the presence of a proton or sodium gradient. F-type ATPases consist of two structural domains, F(1) containing the extramembraneous catalytic core and F(0) containing the membrane proton channel, linked together by a central stalk and a peripheral stalk. During catalysis, ATP synthesis in the catalytic domain of F(1) is coupled via a rotary mechanism of the central stalk subunits to proton translocation. Key component of the F(0) channel; it plays a direct role in translocation across the membrane. A homomeric c-ring of between 10-14 subunits forms the central stalk rotor element with the F(1) delta and epsilon subunits. In Histophilus somni (strain 129Pt) (Haemophilus somnus), this protein is ATP synthase subunit c.